The sequence spans 1028 residues: Isoleucine--tRNA ligase (1028 aa).

A 'HIGH' region motif is present at residues 51 to 61; the sequence is PTANGRPHIGH. The short motif at 591-595 is the 'KMSKS' region element; that stretch reads KMSKS. Residue lysine 594 participates in ATP binding.

It belongs to the class-I aminoacyl-tRNA synthetase family. IleS type 2 subfamily. As to quaternary structure, monomer. Requires Zn(2+) as cofactor.

It localises to the cytoplasm. The catalysed reaction is tRNA(Ile) + L-isoleucine + ATP = L-isoleucyl-tRNA(Ile) + AMP + diphosphate. Its function is as follows. Catalyzes the attachment of isoleucine to tRNA(Ile). As IleRS can inadvertently accommodate and process structurally similar amino acids such as valine, to avoid such errors it has two additional distinct tRNA(Ile)-dependent editing activities. One activity is designated as 'pretransfer' editing and involves the hydrolysis of activated Val-AMP. The other activity is designated 'posttransfer' editing and involves deacylation of mischarged Val-tRNA(Ile). The sequence is that of Isoleucine--tRNA ligase from Thermoplasma volcanium (strain ATCC 51530 / DSM 4299 / JCM 9571 / NBRC 15438 / GSS1).